We begin with the raw amino-acid sequence, 369 residues long: RNA-binding protein rnp24 (369 aa).

Disordered stretches follow at residues Met-1–Glu-77, Thr-200–Ile-219, and Arg-304–Asp-369. An RRM 1 domain is found at Trp-105 to Pro-206. The span at Pro-209–Ile-219 shows a compositional bias: polar residues. The region spanning Ser-228–Pro-310 is the RRM 2 domain. The segment covering Gln-325–Ser-341 has biased composition (basic and acidic residues). Residues Ala-346–Ala-357 are compositionally biased toward low complexity.

It is found in the nucleus. The chain is RNA-binding protein rnp24 (rnp24) from Schizosaccharomyces pombe (strain 972 / ATCC 24843) (Fission yeast).